Consider the following 89-residue polypeptide: UPF0223 protein BPUM_1362 (89 aa).

This sequence belongs to the UPF0223 family.

The protein is UPF0223 protein BPUM_1362 of Bacillus pumilus (strain SAFR-032).